Consider the following 267-residue polypeptide: Transcription factor Spi-B (267 aa).

Positions 1–31 are TAD1 (Acidic); sequence MLALEAAQLDGPHLSCLYPEGVFYDLDSCKP. Residues 41-62 are TAD2; sequence LDSTWGWTEAPPAPAIAPYEAF. Residues 174–257 constitute a DNA-binding region (ETS); the sequence is LRLYQFLLGL…VKRKLTYQFD (84 aa).

The protein belongs to the ETS family. Can form homotypic interactions. Interacts with IRF4/Pip. Interacts with JUN. Interacts with TBP. May also interact with CREBBP and EP300. Interacts with NONO/p54(nrb). As to expression, expressed in the medulla of the thymus, the spleen and germinal centers of the lymph nodes. Expressed in B-cells and T-cells, expression increases during B-cell maturation and decreases during T-cell maturation.

The protein localises to the nucleus. In terms of biological role, sequence specific transcriptional activator which binds to the PU-box, a purine-rich DNA sequence (5'-GAGGAA-3') that can act as a lymphoid-specific enhancer. Promotes development of plasmacytoid dendritic cells (pDCs), also known as type 2 DC precursors (pre-DC2) or natural interferon (IFN)-producing cells. These cells have the capacity to produce large amounts of interferon and block viral replication. Required for B-cell receptor (BCR) signaling, which is necessary for normal B-cell development and antigenic stimulation. This chain is Transcription factor Spi-B (Spib), found in Mus musculus (Mouse).